We begin with the raw amino-acid sequence, 356 residues long: D-alanine--D-alanine ligase (356 aa).

An ATP-grasp domain is found at 134–339; it reads KQLFEHRGLP…YPELITKLIE (206 aa). 167 to 222 serves as a coordination point for ATP; sequence NDKLNYPVFVKPANLGSSVGISKCNNEAELKEGIKEAFQFDRKLVIEQGVNAREIE. Mg(2+) contacts are provided by D293, E306, and N308.

It belongs to the D-alanine--D-alanine ligase family. It depends on Mg(2+) as a cofactor. Mn(2+) serves as cofactor.

Its subcellular location is the cytoplasm. It catalyses the reaction 2 D-alanine + ATP = D-alanyl-D-alanine + ADP + phosphate + H(+). It participates in cell wall biogenesis; peptidoglycan biosynthesis. In terms of biological role, cell wall formation. The protein is D-alanine--D-alanine ligase of Staphylococcus aureus (strain MSSA476).